A 440-amino-acid polypeptide reads, in one-letter code: tRNA(Ile)-lysidine synthase (440 aa).

25–30 (SGGVDS) contacts ATP.

Belongs to the tRNA(Ile)-lysidine synthase family.

It is found in the cytoplasm. The enzyme catalyses cytidine(34) in tRNA(Ile2) + L-lysine + ATP = lysidine(34) in tRNA(Ile2) + AMP + diphosphate + H(+). In terms of biological role, ligates lysine onto the cytidine present at position 34 of the AUA codon-specific tRNA(Ile) that contains the anticodon CAU, in an ATP-dependent manner. Cytidine is converted to lysidine, thus changing the amino acid specificity of the tRNA from methionine to isoleucine. The sequence is that of tRNA(Ile)-lysidine synthase from Vibrio cholerae serotype O1 (strain ATCC 39541 / Classical Ogawa 395 / O395).